The chain runs to 1803 residues: Pyruvate dehydrogenase [NADP(+)], mitochondrial (1803 aa).

The N-terminal 37 residues, 1–37 (MKQSVRPIISNVLRKEVALYSTIIGQDKGKEPTGRTY), are a transit peptide targeting the mitochondrion. 2 4Fe-4S ferredoxin-type domains span residues 747–776 (FIPQ…PFVL) and 802–831 (FRIQ…MTDA). [4Fe-4S] cluster contacts are provided by cysteine 756, cysteine 759, cysteine 762, cysteine 766, cysteine 811, cysteine 814, cysteine 817, and cysteine 821. Residues 1248–1391 (VTILYGSETG…GFNNWIPSVW (144 aa)) form the Flavodoxin-like domain. Residues 1425–1650 (KSTPVLSITG…IHPTAMEFPD (226 aa)) enclose the FAD-binding FR-type domain. Residues 1458–1469 (YQVGDSLGVFPE) and 1585–1595 (IKPRYYSISSA) contribute to the FAD site.

The protein in the N-terminal section; belongs to the pyruvate:ferredoxin/flavodoxin oxidoreductase family. In terms of assembly, homodimer. Requires FAD as cofactor. The cofactor is FMN. Thiamine diphosphate is required as a cofactor. It depends on iron-sulfur cluster as a cofactor.

It is found in the mitochondrion. It catalyses the reaction pyruvate + NADP(+) + CoA = acetyl-CoA + CO2 + NADPH. Pyruvate dehydrogenase [NADP(+)] is one of three enzymes participating in respiratory metabolism. The enzyme is also active with 2-oxobutyrate and oxaloacetate. The enzyme is oxygen sensitive. This chain is Pyruvate dehydrogenase [NADP(+)], mitochondrial (PNO), found in Euglena gracilis.